Reading from the N-terminus, the 497-residue chain is Zinc finger protein 3 (497 aa).

The segment covering 1–20 (MGTEKKEGLPKEETSEDSKP) has biased composition (basic and acidic residues). Residues 1–53 (MGTEKKEGLPKEETSEDSKPHGQTVEKLAQEVCHGHEFGEASEEDMSEGHLRE) are disordered. Residues Lys6 and Lys11 each participate in a glycyl lysine isopeptide (Lys-Gly) (interchain with G-Cter in SUMO2) cross-link. C2H2-type zinc fingers lie at residues 136-158 (HTCK…MRVH), 164-186 (FECK…QRIH), 192-214 (FACT…HRIH), 220-242 (YKCE…QRIH), 248-270 (YECN…QRIH), 276-298 (HECS…QKIH), 304-326 (YLCN…QRIH), 332-354 (YECS…IRIH), 360-382 (YVCK…ERIH), 388-410 (YECF…QRIH), 416-438 (HQCN…QKIH), 444-466 (YECS…QRIH), and 472-494 (YECQ…QSVH).

It belongs to the krueppel C2H2-type zinc-finger protein family.

The protein resides in the nucleus. Its function is as follows. May be involved in transcriptional regulation. This chain is Zinc finger protein 3 (Zfp3), found in Mus musculus (Mouse).